Reading from the N-terminus, the 86-residue chain is MSREEGNNGRRPGGKMRRSRKKVCAFCVDKAEFIDYKDINKLRKYVTERGKILPRRISGTCAKHQRELTSSIKRARNIALLPFTTE.

The interval 1 to 20 is disordered; the sequence is MSREEGNNGRRPGGKMRRSR.

The protein belongs to the bacterial ribosomal protein bS18 family. In terms of assembly, part of the 30S ribosomal subunit. Forms a tight heterodimer with protein bS6.

Binds as a heterodimer with protein bS6 to the central domain of the 16S rRNA, where it helps stabilize the platform of the 30S subunit. This chain is Small ribosomal subunit protein bS18, found in Clostridium beijerinckii (strain ATCC 51743 / NCIMB 8052) (Clostridium acetobutylicum).